Consider the following 255-residue polypeptide: tRNA (guanine-N(1)-)-methyltransferase (255 aa).

Residues G113 and 133–138 (IGDYVL) each bind S-adenosyl-L-methionine.

It belongs to the RNA methyltransferase TrmD family. Homodimer.

It is found in the cytoplasm. It catalyses the reaction guanosine(37) in tRNA + S-adenosyl-L-methionine = N(1)-methylguanosine(37) in tRNA + S-adenosyl-L-homocysteine + H(+). Functionally, specifically methylates guanosine-37 in various tRNAs. This chain is tRNA (guanine-N(1)-)-methyltransferase, found in Salmonella schwarzengrund (strain CVM19633).